The sequence spans 401 residues: Probable tRNA sulfurtransferase (401 aa).

The THUMP domain maps to 60–165 (EPIIDKLKTV…QDGTYVTCHD (106 aa)). ATP is bound by residues 183–184 (ML), 208–209 (HF), arginine 265, glycine 287, and glutamine 296.

The protein belongs to the ThiI family.

Its subcellular location is the cytoplasm. It carries out the reaction [ThiI sulfur-carrier protein]-S-sulfanyl-L-cysteine + a uridine in tRNA + 2 reduced [2Fe-2S]-[ferredoxin] + ATP + H(+) = [ThiI sulfur-carrier protein]-L-cysteine + a 4-thiouridine in tRNA + 2 oxidized [2Fe-2S]-[ferredoxin] + AMP + diphosphate. The catalysed reaction is [ThiS sulfur-carrier protein]-C-terminal Gly-Gly-AMP + S-sulfanyl-L-cysteinyl-[cysteine desulfurase] + AH2 = [ThiS sulfur-carrier protein]-C-terminal-Gly-aminoethanethioate + L-cysteinyl-[cysteine desulfurase] + A + AMP + 2 H(+). The protein operates within cofactor biosynthesis; thiamine diphosphate biosynthesis. Its function is as follows. Catalyzes the ATP-dependent transfer of a sulfur to tRNA to produce 4-thiouridine in position 8 of tRNAs, which functions as a near-UV photosensor. Also catalyzes the transfer of sulfur to the sulfur carrier protein ThiS, forming ThiS-thiocarboxylate. This is a step in the synthesis of thiazole, in the thiamine biosynthesis pathway. The sulfur is donated as persulfide by IscS. The sequence is that of Probable tRNA sulfurtransferase from Geobacillus thermodenitrificans (strain NG80-2).